We begin with the raw amino-acid sequence, 485 residues long: NADH-quinone oxidoreductase subunit N (485 aa).

Helical transmembrane passes span 8-28 (LIAL…MLSI), 35-55 (FLNA…LWFV), 71-91 (GFAM…CTFA), 105-125 (FYLL…ANHL), 127-147 (ALFL…GYAF), 159-179 (YTIL…LVYA), 203-223 (LLAG…LVPF), 235-255 (PAPV…GVVM), 271-291 (VVLG…ALSQ), 297-317 (LLGY…IALQ), 326-346 (VGVY…VVSL), 373-393 (AAVM…LGFI), 408-430 (WWLV…RVAV), and 455-475 (IVVL…QPLI).

The protein belongs to the complex I subunit 2 family. NDH-1 is composed of 13 different subunits. Subunits NuoA, H, J, K, L, M, N constitute the membrane sector of the complex.

It localises to the cell inner membrane. The catalysed reaction is a quinone + NADH + 5 H(+)(in) = a quinol + NAD(+) + 4 H(+)(out). Functionally, NDH-1 shuttles electrons from NADH, via FMN and iron-sulfur (Fe-S) centers, to quinones in the respiratory chain. The immediate electron acceptor for the enzyme in this species is believed to be ubiquinone. Couples the redox reaction to proton translocation (for every two electrons transferred, four hydrogen ions are translocated across the cytoplasmic membrane), and thus conserves the redox energy in a proton gradient. This is NADH-quinone oxidoreductase subunit N from Salmonella dublin (strain CT_02021853).